Consider the following 148-residue polypeptide: Phosphoribosyl-AMP cyclohydrolase (148 aa).

Aspartate 91 is a binding site for Mg(2+). Cysteine 92 is a Zn(2+) binding site. Aspartate 93 and aspartate 95 together coordinate Mg(2+). Zn(2+) contacts are provided by cysteine 109 and cysteine 116.

It belongs to the PRA-CH family. In terms of assembly, homodimer. It depends on Mg(2+) as a cofactor. Zn(2+) serves as cofactor.

The protein localises to the cytoplasm. It carries out the reaction 1-(5-phospho-beta-D-ribosyl)-5'-AMP + H2O = 1-(5-phospho-beta-D-ribosyl)-5-[(5-phospho-beta-D-ribosylamino)methylideneamino]imidazole-4-carboxamide. The protein operates within amino-acid biosynthesis; L-histidine biosynthesis; L-histidine from 5-phospho-alpha-D-ribose 1-diphosphate: step 3/9. Functionally, catalyzes the hydrolysis of the adenine ring of phosphoribosyl-AMP. This chain is Phosphoribosyl-AMP cyclohydrolase, found in Rhodopseudomonas palustris (strain HaA2).